We begin with the raw amino-acid sequence, 480 residues long: Protein nucleotidyltransferase YdiU (480 aa).

Residues G86, G88, R89, K109, D121, G122, R172, and R179 each coordinate ATP. The Proton acceptor role is filled by D248. 2 residues coordinate Mg(2+): N249 and D258. D258 lines the ATP pocket.

It belongs to the SELO family. The cofactor is Mg(2+). It depends on Mn(2+) as a cofactor.

The catalysed reaction is L-seryl-[protein] + ATP = 3-O-(5'-adenylyl)-L-seryl-[protein] + diphosphate. The enzyme catalyses L-threonyl-[protein] + ATP = 3-O-(5'-adenylyl)-L-threonyl-[protein] + diphosphate. It carries out the reaction L-tyrosyl-[protein] + ATP = O-(5'-adenylyl)-L-tyrosyl-[protein] + diphosphate. It catalyses the reaction L-histidyl-[protein] + UTP = N(tele)-(5'-uridylyl)-L-histidyl-[protein] + diphosphate. The catalysed reaction is L-seryl-[protein] + UTP = O-(5'-uridylyl)-L-seryl-[protein] + diphosphate. The enzyme catalyses L-tyrosyl-[protein] + UTP = O-(5'-uridylyl)-L-tyrosyl-[protein] + diphosphate. Functionally, nucleotidyltransferase involved in the post-translational modification of proteins. It can catalyze the addition of adenosine monophosphate (AMP) or uridine monophosphate (UMP) to a protein, resulting in modifications known as AMPylation and UMPylation. The polypeptide is Protein nucleotidyltransferase YdiU (Enterobacter sp. (strain 638)).